The sequence spans 779 residues: Mediator of RNA polymerase II transcription subunit 15 (779 aa).

Composition is skewed to polar residues over residues 70–90 (NKNQ…NQQG) and 98–108 (ALQTLATQGTR). 4 disordered regions span residues 70 to 131 (NKNQ…GGNA), 209 to 407 (NPMQ…VPIG), 437 to 512 (FLRQ…NPQE), and 629 to 649 (PAKQ…TGSQ). Residues 114–130 (GQMGPGGPMGNQMGGGN) are compositionally biased toward gly residues. Composition is skewed to low complexity over residues 209-232 (NPMQ…QPQG) and 240-270 (PNQM…QMNQ). The segment covering 274-284 (SSGGNQMGNLG) has biased composition (gly residues). Composition is skewed to low complexity over residues 285–295 (GNSPMNPGNMG), 304–329 (QQMP…QMNQ), and 339–350 (GPVQQQQQPGQV). Gly residues predominate over residues 351–361 (GMAGMGPGGPG). Low complexity-rich tracts occupy residues 362–383 (NLQQ…APGQ), 393–402 (NMQAMGNQGN), and 451–468 (GPGS…IPSP). Composition is skewed to polar residues over residues 477–500 (QVSS…NTPG) and 640–649 (PSTSGSTGSQ).

Belongs to the Mediator complex subunit 15 family. As to quaternary structure, component of the Mediator complex.

Its subcellular location is the nucleus. In terms of biological role, component of the Mediator complex, a coactivator involved in the regulated transcription of nearly all RNA polymerase II-dependent genes. Mediator functions as a bridge to convey information from gene-specific regulatory proteins to the basal RNA polymerase II transcription machinery. Mediator is recruited to promoters by direct interactions with regulatory proteins and serves as a scaffold for the assembly of a functional preinitiation complex with RNA polymerase II and the general transcription factors. This is Mediator of RNA polymerase II transcription subunit 15 (MED15) from Aedes aegypti (Yellowfever mosquito).